A 157-amino-acid chain; its full sequence is Protein NrdI (157 aa).

The protein belongs to the NrdI family.

Its function is as follows. Probably involved in ribonucleotide reductase function. The chain is Protein NrdI from Mycoplasma capricolum subsp. capricolum (strain California kid / ATCC 27343 / NCTC 10154).